Here is a 362-residue protein sequence, read N- to C-terminus: Histidine protein methyltransferase 1 homolog (362 aa).

Residues 18–88 (TSLDDGTCVL…EACKHQPSWK (71 aa)) form a disordered region. Basic and acidic residues predominate over residues 30-51 (QKGKQDKRQSTERPGLPRDHSW). Residues 52-65 (KCSSLGNAASSEDT) show a composition bias toward polar residues. Phosphoserine is present on residues Ser-62 and Ser-67. The span at 73–82 (DRSDDPEACK) shows a compositional bias: basic and acidic residues. His-144 bears the Tele-methylhistidine mark. S-adenosyl-L-methionine contacts are provided by residues 158–162 (IWECT), Gly-185, and 206–208 (QDY). Positions 237–243 (PDGKRQR) match the Nuclear localization signal motif. Residues 259–261 (GEW) and Ser-283 contribute to the S-adenosyl-L-methionine site.

Belongs to the methyltransferase superfamily. METTL18 family. As to quaternary structure, interacts with GRWD1 and members of the heat shock protein 90 and 70 families; these proteins may possibly be methylation substrates for the enzyme. Monomethylated at His-144 through automethylation. Automethylation at His-144 positively regulates the methyltransferase activity toward RPL3. Probably methylated on other residues.

It is found in the cytoplasm. The protein localises to the cytosol. The protein resides in the nucleus. Its subcellular location is the nucleolus. The catalysed reaction is L-histidyl-[protein] + S-adenosyl-L-methionine = N(tele)-methyl-L-histidyl-[protein] + S-adenosyl-L-homocysteine + H(+). Protein-L-histidine N-tele-methyltransferase that specifically monomethylates RPL3, thereby regulating translation elongation. Histidine methylation of RPL3 regulates translation elongation by slowing ribosome traversal on tyrosine codons: slower elongation provides enough time for proper folding of synthesized proteins and prevents cellular aggregation of tyrosine-rich proteins. The sequence is that of Histidine protein methyltransferase 1 homolog from Mus musculus (Mouse).